Reading from the N-terminus, the 187-residue chain is Calcium and integrin-binding family member 2 (187 aa).

3 EF-hand domains span residues 66–101, 103–138, and 144–179; these read RENP…LCES, PREL…LTKS, and EVVL…APDF. Ca(2+)-binding residues include Asp116, Asn118, Asp120, Asp127, Asp157, Asp159, Asp161, Lys163, and Asp168.

Monomer. Homodimer. Interacts with WHRN and MYO7A. Interacts with ITGA2B (via C-terminus cytoplasmic tail region); the interactions are stabilized/increased in a calcium and magnesium-dependent manner. Interacts with ITGA7 (via C-terminus cytoplasmic tail region); the interactions are stabilized/increased in a calcium and magnesium-dependent manner. Interacts with TMC1. Interacts with TMC2. In terms of tissue distribution, widely expressed.

It localises to the cytoplasm. The protein localises to the cell projection. The protein resides in the stereocilium. It is found in the photoreceptor inner segment. Its subcellular location is the cilium. It localises to the photoreceptor outer segment. The protein localises to the cell membrane. The protein resides in the sarcolemma. In terms of biological role, calcium- and integrin-binding protein that plays a role in intracellular calcium homeostasis. Acts as an auxiliary subunit of the sensory mechanoelectrical transduction (MET) channel in hair cells. Essential for mechanoelectrical transduction (MET) currents in auditory hair cells and thereby required for hearing. Regulates the function of hair cell mechanotransduction by controlling the distribution of transmembrane channel-like proteins TMC1 and TMC2, and by regulating the function of the MET channels in hair cells. Required for the maintenance of auditory hair cell stereocilia bundle morphology and function and for hair-cell survival in the cochlea. Critical for proper photoreceptor cell maintenance and function. Plays a role in intracellular calcium homeostasis by decreasing ATP-induced calcium release. This Homo sapiens (Human) protein is Calcium and integrin-binding family member 2 (CIB2).